A 165-amino-acid polypeptide reads, in one-letter code: Interferon gamma (165 aa).

The N-terminal stretch at 1–23 is a signal peptide; it reads MKYTSYILAFQLCIVLGSLGCYC. Gln24 bears the Pyrrolidone carboxylic acid mark. Asn48 and Asn120 each carry an N-linked (GlcNAc...) asparagine glycan.

The protein belongs to the type II (or gamma) interferon family. Homodimer. Interacts with IFNGR1 (via extracellular domain); this interaction promotes IFNGR1 dimerization. As to expression, released primarily from activated T lymphocytes.

It is found in the secreted. In terms of biological role, type II interferon produced by immune cells such as T-cells and NK cells that plays crucial roles in antimicrobial, antiviral, and antitumor responses by activating effector immune cells and enhancing antigen presentation. Primarily signals through the JAK-STAT pathway after interaction with its receptor IFNGR1 to affect gene regulation. Upon IFNG binding, IFNGR1 intracellular domain opens out to allow association of downstream signaling components JAK2, JAK1 and STAT1, leading to STAT1 activation, nuclear translocation and transcription of IFNG-regulated genes. Many of the induced genes are transcription factors such as IRF1 that are able to further drive regulation of a next wave of transcription. Plays a role in class I antigen presentation pathway by inducing a replacement of catalytic proteasome subunits with immunoproteasome subunits. In turn, increases the quantity, quality, and repertoire of peptides for class I MHC loading. Increases the efficiency of peptide generation also by inducing the expression of activator PA28 that associates with the proteasome and alters its proteolytic cleavage preference. Up-regulates as well MHC II complexes on the cell surface by promoting expression of several key molecules such as cathepsins B/CTSB, H/CTSH, and L/CTSL. Participates in the regulation of hematopoietic stem cells during development and under homeostatic conditions by affecting their development, quiescence, and differentiation. The chain is Interferon gamma (IFNG) from Cercocebus atys (Sooty mangabey).